The following is a 1503-amino-acid chain: Mitogen-activated protein kinase-binding protein 1 (1503 aa).

WD repeat units lie at residues 89–130 (SSRK…QVAE), 133–174 (EHKY…VVAS), 176–214 (KVSSRVTAVSFSEDCSYFVTAGNRHIKFWYLDDSKTSKV), 271–310 (VELRTTVAHCISVTQEYIFCGCADGTVRLFNPSNLHFLST), 337–376 (ARYPDTIALTFDPTNQWLSCVYNDHSIYVWDVRDPKKVGK), 382–431 (YHSS…VHGS), 472–511 (DPRVGIRSVCISPNGQHLASGDRMGTLRIHELQSLSEMLK), 514–556 (AHDS…SLQQ), 560–601 (EHSS…EGVQ), 609–648 (VRKTTLYDMDVEPSWKYTAIGCQDRNIRIFNISSGKQKKL), 654–693 (GEDGTLIKVQTDPSGIYIATSCSDKNLSIFDFSSGECVAT), and 696–735 (GHSEIVTGMKFSNDCKHLISVSGDSCIFVWRLSSEMTISM). Disordered stretches follow at residues 745–817 (RQRG…SSPA), 874–917 (LAPS…RLQT), and 951–1176 (VYPE…SWAS). The span at 784 to 796 (KEGEDEGTEEEEL) shows a compositional bias: acidic residues. 2 stretches are compositionally biased toward polar residues: residues 905-917 (CVSQNERAPRLQT) and 957-972 (DSPTMDTSAFQVQAPT). Over residues 1028–1043 (DLEEPAEGDEDEEEEG) the composition is skewed to acidic residues. A compositionally biased stretch (basic and acidic residues) spans 1058 to 1068 (PDQEQFLKQHF). Polar residues predominate over residues 1089-1129 (SQSISSRFLLQVQTSPLREPSLSSSGLALTSRPDQVSQVSG). Residue serine 1193 is modified to Phosphoserine. 2 disordered regions span residues 1217-1238 (QGSLGSLPQAGGCSSQPHSYQN) and 1369-1391 (QGPESLQPLSPEKTRNPVESSRP).

In terms of assembly, can form homodimers (via C-terminus). Interacts (via C-terminus) with WDR62 (via C-terminus). Interacts with MAPK9. Interacts (via N-terminus) with NOD2; the interaction is enhanced in presence of muramyl dipeptide (MDP). Interacts with MAPK10. In terms of tissue distribution, ubiquitously expressed. Highest expression observed in brain.

Its subcellular location is the cytoplasm. The protein localises to the nucleus. It localises to the cytoskeleton. The protein resides in the spindle pole. Functionally, negative regulator of NOD2 function. It down-regulates NOD2-induced processes such as activation of NF-kappa-B signaling, IL8 secretion and antibacterial response. Involved in JNK signaling pathway. This Mus musculus (Mouse) protein is Mitogen-activated protein kinase-binding protein 1 (Mapkbp1).